Here is a 244-residue protein sequence, read N- to C-terminus: MIRTDAKDGALVLFSGGQDSATCVAWALERYQTVETLGFDYGQRHRVELECREGVRDALKRRFPQWSHKLGDDHLIDLSVLGSISDTAMTRAIEIETASNGLPNTFVPGRNLLFMTIAAAIAYRRGLRALVGGMCETDFSGYPDCRDDTMKALQVALNLGMDTRFVLETPLMWLDKADTWRLAEQLGGAPLVELIRVETHTCYVGERSELHDWGFGCGECPACKLRKRGYDAYLRGESVTEAPA.

14-24 (FSGGQDSATCV) is a binding site for ATP. Zn(2+) contacts are provided by C202, C217, C220, and C223.

This sequence belongs to the QueC family. Requires Zn(2+) as cofactor.

The enzyme catalyses 7-carboxy-7-deazaguanine + NH4(+) + ATP = 7-cyano-7-deazaguanine + ADP + phosphate + H2O + H(+). The protein operates within purine metabolism; 7-cyano-7-deazaguanine biosynthesis. Its function is as follows. Catalyzes the ATP-dependent conversion of 7-carboxy-7-deazaguanine (CDG) to 7-cyano-7-deazaguanine (preQ(0)). In Burkholderia mallei (strain NCTC 10229), this protein is 7-cyano-7-deazaguanine synthase.